Consider the following 277-residue polypeptide: 4-hydroxy-tetrahydrodipicolinate reductase (277 aa).

Residues 11-16 and 110-112 each bind NAD(+); these read GALGRM and GTT. H166 (proton donor/acceptor) is an active-site residue. H167 serves as a coordination point for (S)-2,3,4,5-tetrahydrodipicolinate. The active-site Proton donor is K170. 176 to 177 serves as a coordination point for (S)-2,3,4,5-tetrahydrodipicolinate; sequence GT.

The protein belongs to the DapB family.

It is found in the cytoplasm. It carries out the reaction (S)-2,3,4,5-tetrahydrodipicolinate + NAD(+) + H2O = (2S,4S)-4-hydroxy-2,3,4,5-tetrahydrodipicolinate + NADH + H(+). The catalysed reaction is (S)-2,3,4,5-tetrahydrodipicolinate + NADP(+) + H2O = (2S,4S)-4-hydroxy-2,3,4,5-tetrahydrodipicolinate + NADPH + H(+). The protein operates within amino-acid biosynthesis; L-lysine biosynthesis via DAP pathway; (S)-tetrahydrodipicolinate from L-aspartate: step 4/4. Its function is as follows. Catalyzes the conversion of 4-hydroxy-tetrahydrodipicolinate (HTPA) to tetrahydrodipicolinate. This chain is 4-hydroxy-tetrahydrodipicolinate reductase, found in Parasynechococcus marenigrum (strain WH8102).